A 421-amino-acid chain; its full sequence is Esterase LipQ (421 aa).

Residues serine 249, aspartate 344, and histidine 377 contribute to the active site.

The protein belongs to the 'GDXG' lipolytic enzyme family.

The enzyme catalyses hexadecanoate ester + H2O = an aliphatic alcohol + hexadecanoate + H(+). Functionally, shows lipase activity. Is highly immunogenic and may play an important role in the virulence and pathogenesis of M.tuberculosis infection, by altering the balance of cytokines. Significantly down-regulates the expression level of pro-inflammatory cytokines (TNF-alpha and IFN-gamma) and up-regulates the level of anti-inflammatory cytokines such as IL-4 and IL-10 as compared to LPS stimulated macrophages. Also inhibits the expression of iNOS, TLR2 and transcription factor NF-kappa-B in LPS stimulated macrophages whereas the expression of TLR-4 remains unchanged. The protein is Esterase LipQ of Mycobacterium tuberculosis (strain ATCC 25618 / H37Rv).